A 145-amino-acid chain; its full sequence is S-adenosylmethionine synthase 2 (145 aa).

ATP contacts are provided by residues 6-7 (RK), Ala-23, Lys-27, and Lys-31. L-methionine is bound at residue Lys-31.

Belongs to the AdoMet synthase family. In terms of assembly, homotetramer. Mn(2+) serves as cofactor. The cofactor is Mg(2+). Requires Co(2+) as cofactor. It depends on K(+) as a cofactor. As to expression, mainly in floral buds and roots.

Its subcellular location is the cytoplasm. It catalyses the reaction L-methionine + ATP + H2O = S-adenosyl-L-methionine + phosphate + diphosphate. Its pathway is amino-acid biosynthesis; S-adenosyl-L-methionine biosynthesis; S-adenosyl-L-methionine from L-methionine: step 1/1. In terms of biological role, catalyzes the formation of S-adenosylmethionine from methionine and ATP. The reaction comprises two steps that are both catalyzed by the same enzyme: formation of S-adenosylmethionine (AdoMet) and triphosphate, and subsequent hydrolysis of the triphosphate. This chain is S-adenosylmethionine synthase 2 (SMS-2), found in Petroselinum crispum (Parsley).